The primary structure comprises 438 residues: uncharacterized protein (438 aa).

The signal sequence occupies residues 1–20; that stretch reads MNTRLALVLCAVGSGVLSFS. Residue Cys-21 is the site of N-palmitoyl cysteine attachment. Cys-21 is lipidated: S-diacylglycerol cysteine.

It localises to the cell membrane. This is an uncharacterized protein from Treponema pallidum (strain Nichols).